A 443-amino-acid polypeptide reads, in one-letter code: Glucose-6-phosphate isomerase (443 aa).

Glu-285 acts as the Proton donor in catalysis. Active-site residues include His-306 and Lys-420.

Belongs to the GPI family.

The protein resides in the cytoplasm. The enzyme catalyses alpha-D-glucose 6-phosphate = beta-D-fructose 6-phosphate. Its pathway is carbohydrate biosynthesis; gluconeogenesis. It participates in carbohydrate degradation; glycolysis; D-glyceraldehyde 3-phosphate and glycerone phosphate from D-glucose: step 2/4. Catalyzes the reversible isomerization of glucose-6-phosphate to fructose-6-phosphate. The sequence is that of Glucose-6-phosphate isomerase from Staphylococcus saprophyticus subsp. saprophyticus (strain ATCC 15305 / DSM 20229 / NCIMB 8711 / NCTC 7292 / S-41).